Here is a 1160-residue protein sequence, read N- to C-terminus: ATP-dependent helicase/deoxyribonuclease subunit B (1160 aa).

This sequence belongs to the helicase family. AddB/RexB type 2 subfamily. In terms of assembly, heterodimer of AddA and RexB. It depends on Mg(2+) as a cofactor.

In terms of biological role, the heterodimer acts as both an ATP-dependent DNA helicase and an ATP-dependent, dual-direction single-stranded exonuclease. Recognizes the chi site generating a DNA molecule suitable for the initiation of homologous recombination. This subunit has 5' -&gt; 3' nuclease activity but not helicase activity. This is ATP-dependent helicase/deoxyribonuclease subunit B from Lactobacillus helveticus (strain DPC 4571).